The following is a 432-amino-acid chain: FLYWCH-type zinc finger-containing protein peb-1 (432 aa).

The segment at 1–33 (MLGLEKPLSSDISSSSTDTSAISPISVSSMPLS) is disordered. Over residues 9–26 (SSDISSSSTDTSAISPIS) the composition is skewed to low complexity. The segment at residues 30–188 (MPLSPDKEKK…RNKEGKPRKP (159 aa)) is a DNA-binding region (required for DNA-binding). The segment at 53 to 120 (IVTSFKGYQK…NACTKNTHNH (68 aa)) adopts an FLYWCH-type zinc-finger fold. Residues 174–195 (SLVSARNKEGKPRKPKSKTSTN) are disordered.

The protein resides in the nucleus. Its function is as follows. Putative transcription factor. Binds to specific sequence motif 5'-[TC][AGT]TGCC[GA][AT]-3' in regulatory elements of target genes such as myosin myo-2. May modulate gene expression, perhaps acting in opposition to transcription factor pha-4. Involved in morphogenesis, perhaps especially in formation of the pharynx. Plays roles in molting, feeding and morphology. This chain is FLYWCH-type zinc finger-containing protein peb-1, found in Caenorhabditis briggsae.